Consider the following 817-residue polypeptide: Fibroblast growth factor receptor 2 (817 aa).

An N-terminal signal peptide occupies residues 1–22 (MFARGWLLGALLLMTLATVSVA). Residues 23–377 (RPSLKIDLVN…ETDYPPDYVE (355 aa)) are Extracellular-facing. Ig-like C2-type domains follow at residues 26–126 (LKID…VNVT), 159–247 (PEKM…YTLD), and 256–358 (PILQ…AWLT). Asn-32, Asn-84, and Asn-124 each carry an N-linked (GlcNAc...) asparagine glycan. A disulfide bridge links Cys-63 with Cys-108. The segment at 161-178 (KMEKKLHAVPAANTVKFR) is heparin-binding. A disulfide bond links Cys-179 and Cys-231. N-linked (GlcNAc...) asparagine glycosylation is found at Asn-228, Asn-265, Asn-297, Asn-318, and Asn-331. Cys-278 and Cys-342 are disulfide-bonded. The helical transmembrane segment at 378 to 398 (IAIYCIGVFLIACMVVIVVVC) threads the bilayer. Residues 399-817 (RMRTSAKKPD…YQHINGGIKT (419 aa)) lie on the Cytoplasmic side of the membrane. The interval 429–465 (TVSSDSSSSMSSSTPLVRITTRRSSAHDDPIPEYDLP) is disordered. Low complexity predominate over residues 431–441 (SSDSSSSMSSS). Tyr-462 is modified (phosphotyrosine; by autocatalysis). Residues 477 to 766 (LTLGKPLGEG…LTLATNEEYL (290 aa)) enclose the Protein kinase domain. Residues 483-491 (LGEGCFGQV), Lys-513, 561-563 (EYA), and Asn-567 each bind ATP. At Tyr-582 the chain carries Phosphotyrosine; by autocatalysis. The Proton acceptor role is filled by Asp-622. Residues Tyr-652, Tyr-653, and Tyr-765 each carry the phosphotyrosine; by autocatalysis modification.

Belongs to the protein kinase superfamily. Tyr protein kinase family. Fibroblast growth factor receptor subfamily. As to quaternary structure, monomer. Homodimer after ligand binding. Autophosphorylated. Binding of FGF family members together with heparan sulfate proteoglycan or heparin promotes receptor dimerization and autophosphorylation on tyrosine residues. Autophosphorylation occurs in trans between the two FGFR molecules present in the dimer. Post-translationally, N-glycosylated in the endoplasmic reticulum. The N-glycan chains undergo further maturation to an Endo H-resistant form in the Golgi apparatus. In terms of processing, ubiquitinated. FGFR2 is rapidly ubiquitinated after autophosphorylation, leading to internalization and degradation. Subject to degradation both in lysosomes and by the proteasome.

The protein localises to the cell membrane. It localises to the golgi apparatus. Its subcellular location is the cytoplasmic vesicle. It carries out the reaction L-tyrosyl-[protein] + ATP = O-phospho-L-tyrosyl-[protein] + ADP + H(+). Its activity is regulated as follows. Present in an inactive conformation in the absence of bound ligand. Ligand binding leads to dimerization and activation by autophosphorylation on tyrosine residues. Tyrosine-protein kinase that acts as a cell-surface receptor for fibroblast growth factors and plays an essential role in the regulation of cell proliferation, differentiation, migration and apoptosis, and in the regulation of embryonic development. Required for normal embryonic patterning, limb bud development, lung morphogenesis, osteogenesis and skin development. Plays an essential role in the regulation of osteoblast differentiation, proliferation and apoptosis, and is required for normal skeleton development. Promotes cell proliferation in keratinocytes and immature osteoblasts, but promotes apoptosis in differentiated osteoblasts. Phosphorylates PLCG1, FRS2 and PAK4. Ligand binding leads to the activation of several signaling cascades. Activation of PLCG1 leads to the production of the cellular signaling molecules diacylglycerol and inositol 1,4,5-trisphosphate. Phosphorylation of FRS2 triggers recruitment of GRB2, GAB1, PIK3R1 and SOS1, and mediates activation of RAS, MAPK1/ERK2, MAPK3/ERK1 and the MAP kinase signaling pathway, as well as of the AKT1 signaling pathway. FGFR2 signaling is down-regulated by ubiquitination, internalization and degradation. Mutations that lead to constitutive kinase activation or impair normal FGFR2 maturation, internalization and degradation lead to aberrant signaling. Over-expressed FGFR2 promotes activation of STAT1. The polypeptide is Fibroblast growth factor receptor 2 (fgfr2) (Danio rerio (Zebrafish)).